The primary structure comprises 136 residues: Protein NrdI (136 aa).

Belongs to the NrdI family.

Probably involved in ribonucleotide reductase function. The chain is Protein NrdI from Salmonella arizonae (strain ATCC BAA-731 / CDC346-86 / RSK2980).